We begin with the raw amino-acid sequence, 330 residues long: 4-epi-cubebol synthase ((2E,6E)-farnesyl diphosphate cyclizing) (330 aa).

Residues D91 and E96 each coordinate Mg(2+). The DDXXXE motif signature appears at D91–E96. R184 lines the substrate pocket. Mg(2+)-binding residues include N230 and S234. Residue K237 coordinates substrate. E238 provides a ligand contact to Mg(2+). R316 to Y317 is a binding site for substrate.

It belongs to the terpene synthase family. Requires Mg(2+) as cofactor.

It carries out the reaction (2E,6E)-farnesyl diphosphate + H2O = 4-epi-cubebol + diphosphate. It participates in secondary metabolite biosynthesis; terpenoid biosynthesis. In terms of biological role, catalyzes the conversion of (2E,6E)-farnesyl diphosphate (FPP) to yield the bicyclic sesquiterpenol 4-epi-cubebol via a 1,10-cyclization, which requires the abstraction of the pyrophosphate from FPP to yield a (E,E)-germacradienyl cation. The only accepted substrate is (2E,6E)-farnesyl diphosphate (FPP). The protein is 4-epi-cubebol synthase ((2E,6E)-farnesyl diphosphate cyclizing) of Streptosporangium roseum (strain ATCC 12428 / DSM 43021 / JCM 3005 / KCTC 9067 / NCIMB 10171 / NRRL 2505 / NI 9100).